We begin with the raw amino-acid sequence, 323 residues long: Mortality factor 4-like protein 1 (323 aa).

Residues 12–62 (QEGERVLCFHGPLLYEAKCVKVAIKDKQVKYFIHYSGWNKNWDEWVPESRV) form the Tudor-knot domain. A disordered region spans residues 77-143 (QKANQEQYAE…RKKRARVDPT (67 aa)). Residues 94 to 227 (PGKKTSGLQQ…VAGIKEYFNV (134 aa)) are sufficient for interaction with SIN3A. At K104 the chain carries N6-acetyllysine. Residues 125 to 191 (STSETPQPPR…FYLPAKKNVD (67 aa)) are interaction with RB1-1. The tract at residues 149–303 (TFMNRVEVKV…FLKYLAKNSA (155 aa)) is sufficient for interaction with PHF12. Residues 152 to 323 (NRVEVKVKIP…APPEYHRKAV (172 aa)) enclose the MRG domain. The segment at 284 to 305 (LALLLNYLHDFLKYLAKNSATL) is interaction with RB1-2.

In terms of assembly, component of the NuA4 histone acetyltransferase complex which contains the catalytic subunit KAT5/TIP60 and the subunits EP400, TRRAP/PAF400, BRD8/SMAP, EPC1, DMAP1/DNMAP1, RUVBL1/TIP49, RUVBL2, ING3, actin, ACTL6A/BAF53A, MORF4L1/MRG15, MORF4L2/MRGX, MRGBP, YEATS4/GAS41, VPS72/YL1 and MEAF6. The NuA4 complex interacts with MYC and the adenovirus E1A protein. MORF4L1 may also participate in the formation of NuA4 related complexes which lack the KAT5/TIP60 catalytic subunit, but which include the SWI/SNF related protein SRCAP. Component of the mSin3A histone deacetylase complex, which includes SIN3A, HDAC2, ARID4B, MORF4L1, RBBP4/RbAp48, and RBBP7/RbAp46. May also interact with PHF12 and one or more as yet undefined members of the TLE (transducin-like enhancer of split) family of transcriptional repressors. Component of the SIN3B complex, which includes SIN3B, HDAC2 or HDAC1, PHF12 and MORF4L1. Interacts with RB1 and KAT8. Interacts with the N-terminus of MRFAP1. Found in a complex composed of MORF4L1, MRFAP1 and RB1. Interacts with the entire BRCA complex, which contains BRCA1, PALB2, BRCA2 and RAD51. Interacts with PALB2. Forms a complex with MSL1 and NUPR1.

The protein localises to the nucleus. Component of the NuA4 histone acetyltransferase (HAT) complex which is involved in transcriptional activation of select genes principally by acetylation of nucleosomal histones H4 and H2A. This modification may both alter nucleosome - DNA interactions and promote interaction of the modified histones with other proteins which positively regulate transcription. This complex may be required for the activation of transcriptional programs associated with oncogene and proto-oncogene mediated growth induction, tumor suppressor mediated growth arrest and replicative senescence, apoptosis, and DNA repair. The NuA4 complex ATPase and helicase activities seem to be, at least in part, contributed by the association of RUVBL1 and RUVBL2 with EP400. NuA4 may also play a direct role in DNA repair when directly recruited to sites of DNA damage. As part of the SIN3B complex represses transcription and counteracts the histone acetyltransferase activity of EP300 through the recognition H3K27ac marks by PHF12 and the activity of the histone deacetylase HDAC2. SIN3B complex is recruited downstream of the constitutively active genes transcriptional start sites through interaction with histones and mitigates histone acetylation and RNA polymerase II progression within transcribed regions contributing to the regulation of transcription. Required for homologous recombination repair (HRR) and resistance to mitomycin C (MMC). Involved in the localization of PALB2, BRCA2 and RAD51, but not BRCA1, to DNA-damage foci. This is Mortality factor 4-like protein 1 (Morf4l1) from Rattus norvegicus (Rat).